The following is a 117-amino-acid chain: Large ribosomal subunit protein bL20 (117 aa).

It belongs to the bacterial ribosomal protein bL20 family.

Binds directly to 23S ribosomal RNA and is necessary for the in vitro assembly process of the 50S ribosomal subunit. It is not involved in the protein synthesizing functions of that subunit. The sequence is that of Large ribosomal subunit protein bL20 from Acetivibrio thermocellus (strain ATCC 27405 / DSM 1237 / JCM 9322 / NBRC 103400 / NCIMB 10682 / NRRL B-4536 / VPI 7372) (Clostridium thermocellum).